The primary structure comprises 187 residues: Threonylcarbamoyl-AMP synthase (187 aa).

In terms of domain architecture, YrdC-like spans Glu-3–Gly-187.

This sequence belongs to the SUA5 family. TsaC subfamily.

It is found in the cytoplasm. It carries out the reaction L-threonine + hydrogencarbonate + ATP = L-threonylcarbamoyladenylate + diphosphate + H2O. Functionally, required for the formation of a threonylcarbamoyl group on adenosine at position 37 (t(6)A37) in tRNAs that read codons beginning with adenine. Catalyzes the conversion of L-threonine, HCO(3)(-)/CO(2) and ATP to give threonylcarbamoyl-AMP (TC-AMP) as the acyladenylate intermediate, with the release of diphosphate. The polypeptide is Threonylcarbamoyl-AMP synthase (Shewanella halifaxensis (strain HAW-EB4)).